The chain runs to 172 residues: Trypsin inhibitor DE-3 (172 aa).

2 cysteine pairs are disulfide-bonded: Cys39–Cys83 and Cys132–Cys139.

Belongs to the protease inhibitor I3 (leguminous Kunitz-type inhibitor) family.

Functionally, inhibition of trypsin. The chain is Trypsin inhibitor DE-3 from Erythrina latissima (Broad-leaved coral tree).